The chain runs to 210 residues: Proteasome subunit beta (210 aa).

Positions 1 to 9 (MDNDKHLKG) are cleaved as a propeptide — removed in mature form; by autocatalysis. Thr-10 functions as the Nucleophile in the catalytic mechanism.

Belongs to the peptidase T1B family. As to quaternary structure, the 20S proteasome core is composed of 14 alpha and 14 beta subunits that assemble into four stacked heptameric rings, resulting in a barrel-shaped structure. The two inner rings, each composed of seven catalytic beta subunits, are sandwiched by two outer rings, each composed of seven alpha subunits. The catalytic chamber with the active sites is on the inside of the barrel. Has a gated structure, the ends of the cylinder being occluded by the N-termini of the alpha-subunits. Is capped at one or both ends by the proteasome regulatory ATPase, PAN.

It localises to the cytoplasm. It catalyses the reaction Cleavage of peptide bonds with very broad specificity.. Its activity is regulated as follows. The formation of the proteasomal ATPase PAN-20S proteasome complex, via the docking of the C-termini of PAN into the intersubunit pockets in the alpha-rings, triggers opening of the gate for substrate entry. Interconversion between the open-gate and close-gate conformations leads to a dynamic regulation of the 20S proteasome proteolysis activity. Functionally, component of the proteasome core, a large protease complex with broad specificity involved in protein degradation. This Methanohalophilus mahii (strain ATCC 35705 / DSM 5219 / SLP) protein is Proteasome subunit beta.